The chain runs to 162 residues: Interleukin-15 (162 aa).

The N-terminal stretch at 1–29 is a signal peptide; sequence MRILKPYLRSTSIQCYLCLLLNSHFLTEA. The propeptide occupies 30–48; sequence GIHVFILGCISASLPKTEA. 2 disulfides stabilise this stretch: cysteine 83-cysteine 133 and cysteine 90-cysteine 136. N-linked (GlcNAc...) asparagine glycosylation is found at asparagine 104, asparagine 113, asparagine 121, and asparagine 127.

The protein belongs to the IL-15/IL-21 family.

Its subcellular location is the secreted. In terms of biological role, cytokine that plays a major role in the development of inflammatory and protective immune responses to microbial invaders and parasites by modulating immune cells of both the innate and adaptive immune systems. Stimulates the proliferation of natural killer cells, T-cells and B-cells and promotes the secretion of several cytokines. In monocytes, induces the production of IL8 and monocyte chemotactic protein 1/CCL2, two chemokines that attract neutrophils and monocytes respectively to sites of infection. Unlike most cytokines, which are secreted in soluble form, IL15 is expressed in association with its high affinity IL15RA on the surface of IL15-producing cells and delivers signals to target cells that express IL2RB and IL2RG receptor subunits. Binding to its receptor triggers the phosphorylation of JAK1 and JAK3 and the recruitment and subsequent phosphorylation of signal transducer and activator of transcription-3/STAT3 and STAT5. In mast cells, induces the rapid tyrosine phosphorylation of STAT6 and thereby controls mast cell survival and release of cytokines such as IL4. The polypeptide is Interleukin-15 (IL15) (Bos taurus (Bovine)).